We begin with the raw amino-acid sequence, 64 residues long: Conotoxin Im11.2 (64 aa).

A signal peptide spans 1-26 (MMFRLTSVSCFLLVIVCLNLVVLTNA). Disulfide bonds link Cys-27/Cys-41, Cys-34/Cys-46, Cys-40/Cys-50, and Cys-45/Cys-54. Asp-57 carries the post-translational modification Aspartic acid 1-amide. Residues 61-64 (ATFQ) constitute a propeptide that is removed on maturation.

The protein belongs to the conotoxin I2 superfamily. Expressed by the venom duct.

It is found in the secreted. In Conus imperialis (Imperial cone), this protein is Conotoxin Im11.2.